A 296-amino-acid polypeptide reads, in one-letter code: Homoserine kinase (296 aa).

92 to 102 lines the ATP pocket; sequence PQSRGLGSSAA.

This sequence belongs to the GHMP kinase family. Homoserine kinase subfamily.

The protein localises to the cytoplasm. The enzyme catalyses L-homoserine + ATP = O-phospho-L-homoserine + ADP + H(+). Its pathway is amino-acid biosynthesis; L-threonine biosynthesis; L-threonine from L-aspartate: step 4/5. Its function is as follows. Catalyzes the ATP-dependent phosphorylation of L-homoserine to L-homoserine phosphate. The protein is Homoserine kinase of Cutibacterium acnes (strain DSM 16379 / KPA171202) (Propionibacterium acnes).